Consider the following 183-residue polypeptide: Small ribosomal subunit protein eS10z (183 aa).

The interval 91–183 (LKKSARPPGR…GAGPTSSSME (93 aa)) is disordered. The segment covering 109-130 (DRPRGPPRFEGDRPRFGDRDGY) has biased composition (basic and acidic residues). 2 stretches are compositionally biased toward gly residues: residues 131-146 (RGGP…GEKG) and 161-175 (GRPG…GFGA).

Belongs to the eukaryotic ribosomal protein eS10 family.

The protein localises to the cytoplasm. The protein is Small ribosomal subunit protein eS10z of Oryza sativa subsp. japonica (Rice).